The chain runs to 44 residues: Conotoxin S5.1 (44 aa).

In terms of processing, contains 3 disulfide bonds. Expressed by the venom duct.

Its subcellular location is the secreted. This Conus striatus (Striated cone) protein is Conotoxin S5.1.